A 120-amino-acid polypeptide reads, in one-letter code: Ribosome-binding factor A (120 aa).

The protein belongs to the RbfA family. Monomer. Binds 30S ribosomal subunits, but not 50S ribosomal subunits or 70S ribosomes.

The protein localises to the cytoplasm. In terms of biological role, one of several proteins that assist in the late maturation steps of the functional core of the 30S ribosomal subunit. Associates with free 30S ribosomal subunits (but not with 30S subunits that are part of 70S ribosomes or polysomes). Required for efficient processing of 16S rRNA. May interact with the 5'-terminal helix region of 16S rRNA. The polypeptide is Ribosome-binding factor A (Clostridium botulinum (strain ATCC 19397 / Type A)).